Here is a 276-residue protein sequence, read N- to C-terminus: NAD kinase (276 aa).

Asp-68 serves as the catalytic Proton acceptor. Residues 68–69, Arg-73, 138–139, Lys-149, Asp-168, 179–184, and Gln-237 each bind NAD(+); these read DG, NE, and TAYSLS.

This sequence belongs to the NAD kinase family. A divalent metal cation is required as a cofactor.

The protein localises to the cytoplasm. It catalyses the reaction NAD(+) + ATP = ADP + NADP(+) + H(+). Functionally, involved in the regulation of the intracellular balance of NAD and NADP, and is a key enzyme in the biosynthesis of NADP. Catalyzes specifically the phosphorylation on 2'-hydroxyl of the adenosine moiety of NAD to yield NADP. In Methanopyrus kandleri (strain AV19 / DSM 6324 / JCM 9639 / NBRC 100938), this protein is NAD kinase.